Here is a 364-residue protein sequence, read N- to C-terminus: tRNA (adenine(58)-N(1))-methyltransferase catalytic subunit trm61 (364 aa).

S-adenosyl-L-methionine-binding positions include 114–116 (SAS), Glu135, Arg140, 167–168 (DV), and Asp186. The segment at 280–309 (EQNLSSDAKVEDQDNDSMLGENKSSVSTET) is disordered.

The protein belongs to the class I-like SAM-binding methyltransferase superfamily. TRM61 family. In terms of assembly, heterotetramer; composed of two copies of TRM6 and two copies of TRM61.

The protein resides in the nucleus. The catalysed reaction is adenosine(58) in tRNA + S-adenosyl-L-methionine = N(1)-methyladenosine(58) in tRNA + S-adenosyl-L-homocysteine + H(+). Its function is as follows. Catalytic subunit of tRNA (adenine-N(1)-)-methyltransferase, which catalyzes the formation of N(1)-methyladenine at position 58 (m1A58) in initiator methionyl-tRNA. In Schizosaccharomyces pombe (strain 972 / ATCC 24843) (Fission yeast), this protein is tRNA (adenine(58)-N(1))-methyltransferase catalytic subunit trm61 (cpd1).